Reading from the N-terminus, the 81-residue chain is Costars family protein ABRACL (81 aa).

This sequence belongs to the costars family.

This chain is Costars family protein ABRACL, found in Coturnix coturnix (Common quail).